A 394-amino-acid chain; its full sequence is Phosphopentomutase (394 aa).

Mn(2+) contacts are provided by Asp-13, Asp-286, His-291, Asp-327, His-328, and His-339.

The protein belongs to the phosphopentomutase family. Mn(2+) is required as a cofactor.

The protein localises to the cytoplasm. The catalysed reaction is 2-deoxy-alpha-D-ribose 1-phosphate = 2-deoxy-D-ribose 5-phosphate. The enzyme catalyses alpha-D-ribose 1-phosphate = D-ribose 5-phosphate. It participates in carbohydrate degradation; 2-deoxy-D-ribose 1-phosphate degradation; D-glyceraldehyde 3-phosphate and acetaldehyde from 2-deoxy-alpha-D-ribose 1-phosphate: step 1/2. Its function is as follows. Isomerase that catalyzes the conversion of deoxy-ribose 1-phosphate (dRib-1-P) and ribose 1-phosphate (Rib-1-P) to deoxy-ribose 5-phosphate (dRib-5-P) and ribose 5-phosphate (Rib-5-P), respectively. The chain is Phosphopentomutase from Bacillus thuringiensis (strain Al Hakam).